A 385-amino-acid polypeptide reads, in one-letter code: Putative RNA methyltransferase YpsC (385 aa).

A THUMP domain is found at 44-156 (AICRANLWLR…KDQALITLDS (113 aa)).

The protein belongs to the methyltransferase superfamily. In terms of assembly, interacts with the RNA polymerase core.

In Bacillus subtilis (strain 168), this protein is Putative RNA methyltransferase YpsC (ypsC).